The following is a 416-amino-acid chain: Caspase-9 (416 aa).

The CARD domain maps to 1 to 92; the sequence is MDEADRRLLR…DMLASFLRTN (92 aa). Residue threonine 125 is modified to Phosphothreonine; by MAPK1. Phosphotyrosine; by ABL1 is present on tyrosine 153. Active-site residues include histidine 237 and cysteine 287. The tract at residues 294–320 is disordered; the sequence is HGFEVASTSPEDESPGSNPEPDATPFQ. 3 positions are modified to phosphoserine: serine 302, serine 307, and serine 310. A propeptide spanning residues 316–330 is cleaved from the precursor; that stretch reads ATPFQEGLRTFDQLD. Arginine 355 carries the (Microbial infection) ADP-riboxanated arginine modification.

Belongs to the peptidase C14A family. As to quaternary structure, heterotetramer that consists of two anti-parallel arranged heterodimers, each one formed by a 35 kDa (p35) and a 10 kDa (p10) subunit. Caspase-9 and APAF1 bind to each other via their respective NH2-terminal CED-3 homologous domains in the presence of cytochrome C and ATP. Interacts (inactive form) with EFHD2. Interacts with HAX1. Interacts with BIRC2/c-IAP1, XIAP/BIRC4, BIRC5/survivin, BIRC6/bruce and BIRC7/livin. Interacts with ABL1 (via SH3 domain); the interaction is direct and increases in the response of cells to genotoxic stress and ABL1/c-Abl activation. Interacts with BCL2L10. Interacts with NleF from pathogenic E.coli. Cleavages at Asp-315 by granzyme B and at Asp-330 by caspase-3 generate the two active subunits. Caspase-8 and -10 can also be involved in these processing events. In terms of processing, phosphorylated at Thr-125 by MAPK1/ERK2. Phosphorylation at Thr-125 is sufficient to block caspase-9 processing and subsequent caspase-3 activation. Phosphorylation on Tyr-153 by ABL1/c-Abl; occurs in the response of cells to DNA damage. Post-translationally, (Microbial infection) ADP-riboxanation by C.violaceum CopC blocks CASP9 processing, preventing CASP9 activation and ability to mediate intrinsic apoptosis. Ubiquitinated by BIRC6; this activity is inhibited by DIABLO/SMAC. As to expression, ubiquitous, with highest expression in the heart, moderate expression in liver, skeletal muscle, and pancreas. Low levels in all other tissues. Within the heart, specifically expressed in myocytes.

It catalyses the reaction Strict requirement for an Asp residue at position P1 and with a marked preference for His at position P2. It has a preferred cleavage sequence of Leu-Gly-His-Asp-|-Xaa.. With respect to regulation, inhibited by the effector protein NleF that is produced by pathogenic E.coli; this inhibits apoptosis. Inhibited by BIRC6; following inhibition of BIRC6-caspase binding by DIABLO/SMAC, BIRC6 is subjected to caspase cleavage, leading to an increase in active caspases. Its function is as follows. Involved in the activation cascade of caspases responsible for apoptosis execution. Binding of caspase-9 to Apaf-1 leads to activation of the protease which then cleaves and activates effector caspases caspase-3 (CASP3) or caspase-7 (CASP7). Promotes DNA damage-induced apoptosis in a ABL1/c-Abl-dependent manner. Proteolytically cleaves poly(ADP-ribose) polymerase (PARP). Cleaves BIRC6 following inhibition of BIRC6-caspase binding by DIABLO/SMAC. In terms of biological role, lacks activity is an dominant-negative inhibitor of caspase-9. This chain is Caspase-9 (CASP9), found in Homo sapiens (Human).